The primary structure comprises 855 residues: Valine--tRNA ligase (855 aa).

The 'HIGH' region signature appears at 44 to 54 (PNVTGVLHIGH). Residues 524 to 528 (KMSKT) carry the 'KMSKS' region motif. ATP is bound at residue K527. A coiled-coil region spans residues 797–827 (KVEEDPARKQKEREQLEKNIANSKRQLGDEV).

This sequence belongs to the class-I aminoacyl-tRNA synthetase family. ValS type 1 subfamily. As to quaternary structure, monomer.

Its subcellular location is the cytoplasm. The enzyme catalyses tRNA(Val) + L-valine + ATP = L-valyl-tRNA(Val) + AMP + diphosphate. Functionally, catalyzes the attachment of valine to tRNA(Val). As ValRS can inadvertently accommodate and process structurally similar amino acids such as threonine, to avoid such errors, it has a 'posttransfer' editing activity that hydrolyzes mischarged Thr-tRNA(Val) in a tRNA-dependent manner. This chain is Valine--tRNA ligase, found in Solibacter usitatus (strain Ellin6076).